The primary structure comprises 911 residues: Nitrate reductase [NADH] (911 aa).

The segment covering 1-10 (MAASVENRQY) has biased composition (polar residues). The interval 1–71 (MAASVENRQY…SEDEDDDDEK (71 aa)) is disordered. The segment covering 61 to 71 (SSEDEDDDDEK) has biased composition (acidic residues). Cys-188 is a Mo-molybdopterin binding site. The Cytochrome b5 heme-binding domain maps to 536 to 611 (SKMYSMSEVR…LEDFRIGELI (76 aa)). His-571 and His-594 together coordinate heme. The FAD-binding FR-type domain occupies 654–766 (REKIPCKLVD…KGPLGHIEYQ (113 aa)). Residues 706–709 (RAYT), 723–727 (VVKIY), Phe-728, Phe-735, 740–742 (QMS), and Thr-793 each bind FAD.

The protein belongs to the nitrate reductase family. As to quaternary structure, homodimer. FAD serves as cofactor. Heme is required as a cofactor. Requires Mo-molybdopterin as cofactor.

It carries out the reaction nitrite + NAD(+) + H2O = nitrate + NADH + H(+). Nitrate reductase is a key enzyme involved in the first step of nitrate assimilation in plants, fungi and bacteria. This is Nitrate reductase [NADH] (NIA) from Solanum lycopersicum (Tomato).